The chain runs to 551 residues: 2,3-bisphosphoglycerate-independent phosphoglycerate mutase (551 aa).

Residues Asp-22 and Ser-74 each coordinate Mn(2+). Ser-74 acts as the Phosphoserine intermediate in catalysis. Substrate contacts are provided by residues His-135, 165–166 (RD), Arg-201, Arg-208, and 281–284 (RGDR). Asp-319 contacts Mn(2+). Lys-356 provides a ligand contact to substrate. Mn(2+) is bound by residues Asp-424, His-428, Asp-465, His-466, and His-495.

Belongs to the BPG-independent phosphoglycerate mutase family. In terms of assembly, monomer. Mn(2+) is required as a cofactor.

It localises to the cytoplasm. The catalysed reaction is (2R)-2-phosphoglycerate = (2R)-3-phosphoglycerate. It functions in the pathway carbohydrate degradation; glycolysis; pyruvate from D-glyceraldehyde 3-phosphate: step 3/5. In terms of biological role, catalyzes the interconversion of 2-phosphoglycerate (2-PGA) and 3-phosphoglycerate (3-PGA). The chain is 2,3-bisphosphoglycerate-independent phosphoglycerate mutase from Trypanosoma brucei brucei (strain 927/4 GUTat10.1).